Reading from the N-terminus, the 78-residue chain is Exodeoxyribonuclease 7 small subunit (78 aa).

This sequence belongs to the XseB family. As to quaternary structure, heterooligomer composed of large and small subunits.

It is found in the cytoplasm. The catalysed reaction is Exonucleolytic cleavage in either 5'- to 3'- or 3'- to 5'-direction to yield nucleoside 5'-phosphates.. In terms of biological role, bidirectionally degrades single-stranded DNA into large acid-insoluble oligonucleotides, which are then degraded further into small acid-soluble oligonucleotides. In Actinobacillus succinogenes (strain ATCC 55618 / DSM 22257 / CCUG 43843 / 130Z), this protein is Exodeoxyribonuclease 7 small subunit.